Reading from the N-terminus, the 272-residue chain is Probable prolyl 4-hydroxylase 11 (272 aa).

The Cytoplasmic portion of the chain corresponds to 1–55 (MSKSTSVSTILYLRQRLQGLKIYETSDLIQHINTFDELVGEQVSVDVKIEEKTKD). Residues 56–80 (MILLCSLSPLLTTLTCSMVKVAASL) traverse the membrane as a helical; Signal-anchor for type II membrane protein segment. Residues 81 to 272 (RFPNERWLEV…KRHCLSLNLF (192 aa)) are Lumenal-facing. Residues 179-272 (NGETLQVINY…KRHCLSLNLF (94 aa)) enclose the Fe2OG dioxygenase domain. Fe cation contacts are provided by His-197, Asp-199, and His-261.

It belongs to the P4HA family. Fe(2+) is required as a cofactor. Requires L-ascorbate as cofactor.

The protein localises to the endoplasmic reticulum membrane. The enzyme catalyses L-prolyl-[collagen] + 2-oxoglutarate + O2 = trans-4-hydroxy-L-prolyl-[collagen] + succinate + CO2. In terms of biological role, catalyzes the post-translational formation of 4-hydroxyproline in -Xaa-Pro-Gly- sequences in proline-rich peptide sequences of plant glycoproteins and other proteins. Hydroxyprolines are important constituent of many plant cell wall glycoproteins such as extensins, hydroxyproline-rich glycoproteins, lectins and arabinogalactan proteins. The chain is Probable prolyl 4-hydroxylase 11 from Arabidopsis thaliana (Mouse-ear cress).